The primary structure comprises 350 residues: Anthranilate phosphoribosyltransferase (350 aa).

Residues Gly-88, 91–92 (GD), Thr-96, 98–101 (NIST), 116–124 (KHGGRSVSS), and Ser-128 contribute to the 5-phospho-alpha-D-ribose 1-diphosphate site. Gly-88 is a binding site for anthranilate. Position 100 (Ser-100) interacts with Mg(2+). Arg-174 contributes to the anthranilate binding site. Residues Asp-233 and Glu-234 each coordinate Mg(2+).

Belongs to the anthranilate phosphoribosyltransferase family. Homodimer. Mg(2+) is required as a cofactor.

The catalysed reaction is N-(5-phospho-beta-D-ribosyl)anthranilate + diphosphate = 5-phospho-alpha-D-ribose 1-diphosphate + anthranilate. It participates in amino-acid biosynthesis; L-tryptophan biosynthesis; L-tryptophan from chorismate: step 2/5. Functionally, catalyzes the transfer of the phosphoribosyl group of 5-phosphorylribose-1-pyrophosphate (PRPP) to anthranilate to yield N-(5'-phosphoribosyl)-anthranilate (PRA). This is Anthranilate phosphoribosyltransferase from Albidiferax ferrireducens (strain ATCC BAA-621 / DSM 15236 / T118) (Rhodoferax ferrireducens).